Here is a 238-residue protein sequence, read N- to C-terminus: Flagellar L-ring protein (238 aa).

A signal peptide spans 1 to 17 (MIRKTLAASCAVLLMAG). Cysteine 18 carries N-palmitoyl cysteine lipidation. A lipid anchor (S-diacylglycerol cysteine) is attached at cysteine 18.

It belongs to the FlgH family. The basal body constitutes a major portion of the flagellar organelle and consists of four rings (L,P,S, and M) mounted on a central rod.

The protein resides in the cell outer membrane. It is found in the bacterial flagellum basal body. In terms of biological role, assembles around the rod to form the L-ring and probably protects the motor/basal body from shearing forces during rotation. The polypeptide is Flagellar L-ring protein (Nitratidesulfovibrio vulgaris (strain ATCC 29579 / DSM 644 / CCUG 34227 / NCIMB 8303 / VKM B-1760 / Hildenborough) (Desulfovibrio vulgaris)).